Here is a 140-residue protein sequence, read N- to C-terminus: Calcitonin (140 aa).

An N-terminal signal peptide occupies residues 1–25 (MGFWKFSPFLPLSILVLYQVGIIQA). The propeptide occupies 26-81 (APFRSALESLPDPAVLPEEESRLLLAALVKDYVQMKVRALEQEQETGGASLDSPRA). A disulfide bridge connects residues Cys84 and Cys90. Position 115 is a proline amide (Pro115). Residues 120 to 140 (VMARGLERDHGPHIGTSQDAY) constitute a propeptide that is removed on maturation.

The protein belongs to the calcitonin family.

It localises to the secreted. Calcitonin is a peptide hormone that causes a rapid but short-lived drop in the level of calcium and phosphate in blood by promoting the incorporation of those ions in the bones. Calcitonin function is mediated by the calcitonin receptor/CALCR and the CALCR-RAMP2 (AMYR2) receptor complex. The polypeptide is Calcitonin (CALCA) (Equus caballus (Horse)).